The chain runs to 128 residues: Virion-associated protein (128 aa).

Coiled-coil stretches lie at residues 1–30 (MNLA…ILAK) and 37–58 (ESSN…EMKE). The segment at 98–128 (FDVGNEGMGSSTNPNALKWPPTEKPQPWPPR) is disordered. The span at 119-128 (TEKPQPWPPR) shows a compositional bias: pro residues. The tract at residues 122–128 (PQPWPPR) is capsid binding.

This sequence belongs to the caulimovirus ORF III family. As to quaternary structure, homotetramer, through coiled-coil domain. Homotrimer when interacts with icosehadral capsid. Interacts with capsid protein, and with Movement protein.

Its subcellular location is the virion. The protein localises to the host cell junction. The protein resides in the host plasmodesma. Functionally, plays a role in virus cell-to-cell and plant-to-plant transmission. Interacts with virion icosahedral capsid and movement protein, thereby facilitating virion cell-to-cell transmission through plasmodesmata opened by viral movement protein. Also interacts with aphid transmission factor, attaching the virion to aphid stylet when the animal feeds on an virus infected plant. Aphid saliva may later detach the virion, inducing release of infectious particles when the animal feeds on a new plant. The sequence is that of Virion-associated protein from Carnation etched ring virus (CERV).